Here is a 488-residue protein sequence, read N- to C-terminus: Cobyric acid synthase (488 aa).

The GATase cobBQ-type domain occupies 252 to 440 (VPLIAVLRFP…VHGLFANDRQ (189 aa)). The active-site Nucleophile is cysteine 334. Residue histidine 432 is part of the active site.

This sequence belongs to the CobB/CobQ family. CobQ subfamily.

It participates in cofactor biosynthesis; adenosylcobalamin biosynthesis. Catalyzes amidations at positions B, D, E, and G on adenosylcobyrinic A,C-diamide. NH(2) groups are provided by glutamine, and one molecule of ATP is hydrogenolyzed for each amidation. The polypeptide is Cobyric acid synthase (Methylorubrum populi (strain ATCC BAA-705 / NCIMB 13946 / BJ001) (Methylobacterium populi)).